The following is a 935-amino-acid chain: Phosphoenolpyruvate carboxylase (935 aa).

Active-site residues include His161 and Lys593.

The protein belongs to the PEPCase type 1 family. It depends on Mg(2+) as a cofactor.

It carries out the reaction oxaloacetate + phosphate = phosphoenolpyruvate + hydrogencarbonate. Forms oxaloacetate, a four-carbon dicarboxylic acid source for the tricarboxylic acid cycle. This Mycolicibacterium paratuberculosis (strain ATCC BAA-968 / K-10) (Mycobacterium paratuberculosis) protein is Phosphoenolpyruvate carboxylase.